The sequence spans 657 residues: Archaeal Lon protease (657 aa).

The Cytoplasmic portion of the chain corresponds to 1-123; that stretch reads MEENIESVEE…KAEREKRDRS (123 aa). 57-64 serves as a coordination point for ATP; it reads GEPGTGKS. A helical membrane pass occupies residues 124 to 144; the sequence is RSIMFVIFSVVLLGIIAAIVL. Position 145 (Arg-145) is a topological domain, extracellular. A helical membrane pass occupies residues 146 to 166; it reads SITLIFFAIMAAAFLYMAMAF. Residues 167–657 are Cytoplasmic-facing; it reads NPVIRNERAM…ATTRAGNNAA (491 aa). The Lon proteolytic domain maps to 433 to 618; the sequence is GSVVGMVNGL…EDVLRVALVN (186 aa). Active-site residues include Ser-525 and Lys-568.

Belongs to the peptidase S16 family. Archaeal LonB subfamily. In terms of assembly, homohexamer. Organized in a ring with a central cavity.

Its subcellular location is the cell membrane. In terms of biological role, ATP-dependent serine protease that mediates the selective degradation of mutant and abnormal proteins as well as certain short-lived regulatory proteins. Degrades polypeptides processively. The chain is Archaeal Lon protease from Thermoplasma acidophilum (strain ATCC 25905 / DSM 1728 / JCM 9062 / NBRC 15155 / AMRC-C165).